The chain runs to 60 residues: Putative mercuric resistance protein (60 aa).

The chain is Putative mercuric resistance protein from Pseudomonas aeruginosa.